The chain runs to 576 residues: G protein-coupled receptor kinase 6 (576 aa).

Residues 1–185 form an N-terminal region; the sequence is MELENIVANT…LERQPVTKNT (185 aa). Positions 53–171 constitute an RGS domain; that stretch reads YHSLCERQPI…LDSIYFNRFL (119 aa). Residues 186–448 enclose the Protein kinase domain; sequence FRQYRVLGKG…AREVKEHPLF (263 aa). Residues 192-200, Lys215, and 264-270 each bind ATP; these read LGKGGFGEV and TLMNGGD. Asp311 (proton acceptor) is an active-site residue. 315-318 contacts ATP; the sequence is ENIL. The region spanning 449-514 is the AGC-kinase C-terminal domain; the sequence is KKLNFKRLGA…GSVSIPWQNE (66 aa). Residue Ser484 is modified to Phosphoserine; by autocatalysis. Thr485 bears the Phosphothreonine; by autocatalysis mark. Residues Cys561, Cys562, and Cys565 are each lipidated (S-palmitoyl cysteine). Phosphoserine occurs at positions 566 and 568.

The protein belongs to the protein kinase superfamily. AGC Ser/Thr protein kinase family. GPRK subfamily. As to quaternary structure, interacts with GIT1. Widely expressed. Detectable in all brain areas examined.

It is found in the membrane. The enzyme catalyses [G-protein-coupled receptor] + ATP = [G-protein-coupled receptor]-phosphate + ADP + H(+). In terms of biological role, specifically phosphorylates the activated forms of G protein-coupled receptors. Such receptor phosphorylation initiates beta-arrestin-mediated receptor desensitization, internalization, and signaling events leading to their desensitization. Seems to be involved in the desensitization of D2-like dopamine receptors in striatum and chemokine receptor CXCR4 which is critical for CXCL12-induced cell chemotaxis. Phosphorylates rhodopsin (RHO) (in vitro) and a non G-protein-coupled receptor: LRP6 during Wnt signaling (in vitro). The sequence is that of G protein-coupled receptor kinase 6 (Grk6) from Rattus norvegicus (Rat).